A 186-amino-acid polypeptide reads, in one-letter code: Prorelaxin 1 (186 aa).

A signal peptide spans Met-1–Ala-22. Cystine bridges form between Cys-36/Cys-173, Cys-48/Cys-186, and Cys-172/Cys-177. Residues Ser-58–Ser-158 constitute a propeptide, connecting peptide. Gln-163 is modified (pyrrolidone carboxylic acid).

Belongs to the insulin family. In terms of assembly, heterodimer of a B chain and an A chain linked by two disulfide bonds.

It localises to the secreted. Functionally, relaxin is an ovarian hormone that acts with estrogen to produce dilatation of the birth canal in many mammals. The sequence is that of Prorelaxin 1 (Rln1) from Rattus norvegicus (Rat).